A 301-amino-acid polypeptide reads, in one-letter code: HTH-type transcriptional regulator EstR (301 aa).

The region spanning 5-62 (PSLRQLSYLVTLSETLHFTEAARRSFVTQSTLSGGIMELERLLGGVLVERDRQNVRLT) is the HTH lysR-type domain. Positions 22–41 (FTEAARRSFVTQSTLSGGIM) form a DNA-binding region, H-T-H motif.

The protein belongs to the LysR transcriptional regulatory family.

In terms of biological role, transcriptional regulator of the esterase operon. The chain is HTH-type transcriptional regulator EstR (estR) from Acinetobacter baylyi (strain ATCC 33305 / BD413 / ADP1).